Reading from the N-terminus, the 239-residue chain is ATP-dependent dethiobiotin synthetase BioD (239 aa).

15 to 20 is an ATP binding site; that stretch reads EIGKTF. T19 contacts Mg(2+). K40 is a catalytic residue. ATP-binding positions include D57, 118-121, 178-179, and 211-213; these read EGVG, NH, and AHL. D57 and E118 together coordinate Mg(2+).

The protein belongs to the dethiobiotin synthetase family. As to quaternary structure, homodimer. The cofactor is Mg(2+).

It is found in the cytoplasm. The catalysed reaction is (7R,8S)-7,8-diammoniononanoate + CO2 + ATP = (4R,5S)-dethiobiotin + ADP + phosphate + 3 H(+). The protein operates within cofactor biosynthesis; biotin biosynthesis; biotin from 7,8-diaminononanoate: step 1/2. Catalyzes a mechanistically unusual reaction, the ATP-dependent insertion of CO2 between the N7 and N8 nitrogen atoms of 7,8-diaminopelargonic acid (DAPA, also called 7,8-diammoniononanoate) to form a ureido ring. The polypeptide is ATP-dependent dethiobiotin synthetase BioD (Burkholderia vietnamiensis (strain G4 / LMG 22486) (Burkholderia cepacia (strain R1808))).